The sequence spans 386 residues: Coproporphyrinogen-III oxidase 1, chloroplastic (386 aa).

Residues 1–48 (MASHSSTLLSSPTFAPFSSHRLHYSPNPSTLRFSRPIRNKPNLALRCS) constitute a chloroplast transit peptide. Positions 125-134 (VLQDGNVFEK) are important for dimerization. A substrate-binding site is contributed by serine 174. The Proton donor role is filled by histidine 188. Substrate is bound by residues 190 to 192 (NYR) and 344 to 349 (GGRIES). The segment at 326–361 (YVEFNLVYDRGTTFGLKTGGRIESILVSLPLSARWE) is important for dimerization.

The protein belongs to the aerobic coproporphyrinogen-III oxidase family. Homodimer. Expressed in cotyledons, leaves and roots.

The protein localises to the plastid. It localises to the chloroplast. The catalysed reaction is coproporphyrinogen III + O2 + 2 H(+) = protoporphyrinogen IX + 2 CO2 + 2 H2O. Its pathway is porphyrin-containing compound metabolism; protoporphyrin-IX biosynthesis; protoporphyrinogen-IX from coproporphyrinogen-III (O2 route): step 1/1. It functions in the pathway porphyrin-containing compound metabolism; chlorophyll biosynthesis. In terms of biological role, key enzyme in heme biosynthesis. Catalyzes the oxidative decarboxylation of propionic acid side chains of rings A and B of coproporphyrinogen III. This is Coproporphyrinogen-III oxidase 1, chloroplastic (CPX1) from Arabidopsis thaliana (Mouse-ear cress).